Reading from the N-terminus, the 117-residue chain is MQNIPPQVQSMLAQLESYQQQLQLLVQQKQKVQLELNEAKKALEEIEKLPDDAVIYKTVGTLIVKTEKAKAVEELKEKVETLEVRLNALERQEKKLNEKLKELTAKIQASLKPPVAG.

This sequence belongs to the prefoldin subunit beta family. In terms of assembly, heterohexamer of two alpha and four beta subunits.

Its subcellular location is the cytoplasm. In terms of biological role, molecular chaperone capable of stabilizing a range of proteins. Seems to fulfill an ATP-independent, HSP70-like function in archaeal de novo protein folding. The protein is Prefoldin subunit beta of Thermococcus gammatolerans (strain DSM 15229 / JCM 11827 / EJ3).